We begin with the raw amino-acid sequence, 107 residues long: UPF0145 protein YbjQ (107 aa).

The protein belongs to the UPF0145 family.

The sequence is that of UPF0145 protein YbjQ from Salmonella dublin (strain CT_02021853).